We begin with the raw amino-acid sequence, 322 residues long: Quinolinate synthase (322 aa).

2 residues coordinate iminosuccinate: histidine 37 and serine 54. Cysteine 99 contacts [4Fe-4S] cluster. Iminosuccinate contacts are provided by residues 125 to 127 (YIN) and serine 142. A [4Fe-4S] cluster-binding site is contributed by cysteine 185. Iminosuccinate is bound by residues 211–213 (HPE) and threonine 228. Cysteine 278 serves as a coordination point for [4Fe-4S] cluster.

This sequence belongs to the quinolinate synthase family. Type 2 subfamily. [4Fe-4S] cluster is required as a cofactor.

The protein localises to the cytoplasm. The catalysed reaction is iminosuccinate + dihydroxyacetone phosphate = quinolinate + phosphate + 2 H2O + H(+). It participates in cofactor biosynthesis; NAD(+) biosynthesis; quinolinate from iminoaspartate: step 1/1. Its function is as follows. Catalyzes the condensation of iminoaspartate with dihydroxyacetone phosphate to form quinolinate. This Prosthecochloris aestuarii (strain DSM 271 / SK 413) protein is Quinolinate synthase.